Consider the following 258-residue polypeptide: 6-carboxyhexanoate--CoA ligase (258 aa).

The protein belongs to the BioW family. As to quaternary structure, homodimer. Mg(2+) serves as cofactor.

It carries out the reaction heptanedioate + ATP + CoA = 6-carboxyhexanoyl-CoA + AMP + diphosphate. It participates in metabolic intermediate metabolism; pimeloyl-CoA biosynthesis; pimeloyl-CoA from pimelate: step 1/1. Functionally, catalyzes the transformation of pimelate into pimeloyl-CoA with concomitant hydrolysis of ATP to AMP. The chain is 6-carboxyhexanoate--CoA ligase from Bacillus atrophaeus (strain 1942).